Consider the following 316-residue polypeptide: 4-diphosphocytidyl-2-C-methyl-D-erythritol kinase (316 aa).

The active site involves lysine 32. Proline 126 to alanine 136 provides a ligand contact to ATP. The active site involves aspartate 168.

It belongs to the GHMP kinase family. IspE subfamily.

The catalysed reaction is 4-CDP-2-C-methyl-D-erythritol + ATP = 4-CDP-2-C-methyl-D-erythritol 2-phosphate + ADP + H(+). It functions in the pathway isoprenoid biosynthesis; isopentenyl diphosphate biosynthesis via DXP pathway; isopentenyl diphosphate from 1-deoxy-D-xylulose 5-phosphate: step 3/6. Functionally, catalyzes the phosphorylation of the position 2 hydroxy group of 4-diphosphocytidyl-2C-methyl-D-erythritol. In Bifidobacterium longum subsp. infantis (strain ATCC 15697 / DSM 20088 / JCM 1222 / NCTC 11817 / S12), this protein is 4-diphosphocytidyl-2-C-methyl-D-erythritol kinase.